We begin with the raw amino-acid sequence, 196 residues long: Adenylate kinase (196 aa).

Position 9–17 (Gly-9–Thr-17) interacts with ATP.

Belongs to the archaeal adenylate kinase family.

The protein resides in the cytoplasm. It catalyses the reaction AMP + ATP = 2 ADP. This Thermococcus kodakarensis (strain ATCC BAA-918 / JCM 12380 / KOD1) (Pyrococcus kodakaraensis (strain KOD1)) protein is Adenylate kinase.